The sequence spans 356 residues: Phosphoribosylformylglycinamidine cyclo-ligase (356 aa).

The protein belongs to the AIR synthase family.

It is found in the cytoplasm. It catalyses the reaction 2-formamido-N(1)-(5-O-phospho-beta-D-ribosyl)acetamidine + ATP = 5-amino-1-(5-phospho-beta-D-ribosyl)imidazole + ADP + phosphate + H(+). It participates in purine metabolism; IMP biosynthesis via de novo pathway; 5-amino-1-(5-phospho-D-ribosyl)imidazole from N(2)-formyl-N(1)-(5-phospho-D-ribosyl)glycinamide: step 2/2. The sequence is that of Phosphoribosylformylglycinamidine cyclo-ligase from Rhizobium meliloti (strain 1021) (Ensifer meliloti).